A 239-amino-acid chain; its full sequence is Proteasome activator complex subunit 2 (239 aa).

A2 is subject to N-acetylalanine. S10 bears the Phosphoserine mark. Positions 65–86 (DIPIPDPPPKDDEMETDKQEKK) are disordered. The span at 72 to 86 (PPKDDEMETDKQEKK) shows a compositional bias: basic and acidic residues.

The protein belongs to the PA28 family. Heterodimer of PSME1 and PSME2, which forms a hexameric ring.

Its function is as follows. Implicated in immunoproteasome assembly and required for efficient antigen processing. The PA28 activator complex enhances the generation of class I binding peptides by altering the cleavage pattern of the proteasome. The sequence is that of Proteasome activator complex subunit 2 (PSME2) from Bos taurus (Bovine).